A 369-amino-acid chain; its full sequence is Variable large protein 7 (369 aa).

The signal sequence occupies residues 1–26; it reads MRKRISAIINKLNISIIIMTVVLMIG. The N-palmitoyl cysteine moiety is linked to residue C27. C27 is lipidated: S-diacylglycerol cysteine.

It belongs to the variable large protein (Vlp) family. Alpha subfamily.

Its subcellular location is the cell outer membrane. Functionally, the Vlp and Vsp proteins are antigenically distinct proteins, only one vlp or vsp gene is transcriptionally active at any one time. Switching between these genes is a mechanism of host immune response evasion. In Borrelia hermsii, this protein is Variable large protein 7.